Here is a 220-residue protein sequence, read N- to C-terminus: Urease accessory protein UreF (220 aa).

Belongs to the UreF family. As to quaternary structure, ureD, UreF and UreG form a complex that acts as a GTP-hydrolysis-dependent molecular chaperone, activating the urease apoprotein by helping to assemble the nickel containing metallocenter of UreC. The UreE protein probably delivers the nickel.

It localises to the cytoplasm. Functionally, required for maturation of urease via the functional incorporation of the urease nickel metallocenter. This Jannaschia sp. (strain CCS1) protein is Urease accessory protein UreF.